The following is a 775-amino-acid chain: Kinesin-like protein KIF3B (775 aa).

The region spanning 9–341 is the Kinesin motor domain; that stretch reads SVKVVVRCRP…LRYANRAKNI (333 aa). 97 to 104 serves as a coordination point for ATP; it reads GQTGTGKT. The segment at 372–419 is disordered; that stretch reads KRSGRKRRRRRRRRVGEGGEEFEDGEDEEDDDDDDEDEEEGVDADKNI. The segment covering 374-385 has biased composition (basic residues); the sequence is SGRKRRRRRRRR. Acidic residues predominate over residues 389-413; sequence GGEEFEDGEDEEDDDDDDEDEEEGV. Residues 501-591 are a coiled coil; sequence LELKRQEIAE…QNELTRELKL (91 aa). Positions 716–775 are disordered; the sequence is FHASLGSSPGLSASAAGFSKKPKSGRPKTGKKVSTPTSAHSPLSGSGSPLYPQSRGLVPK. A compositionally biased stretch (low complexity) spans 718 to 734; it reads ASLGSSPGLSASAAGFS. Positions 735-746 are enriched in basic residues; it reads KKPKSGRPKTGK. A compositionally biased stretch (low complexity) spans 756 to 765; the sequence is SPLSGSGSPL.

The protein belongs to the TRAFAC class myosin-kinesin ATPase superfamily. Kinesin family. As to quaternary structure, heterodimer of KIF3A and KIF3B. KIF3A/KIF3B heterodimer interacts with KIFAP3 forming a heterotrimeric (KIF3A/KIF3B/KIFAP3) complex.

It localises to the cytoplasm. The protein localises to the cytoskeleton. The protein resides in the cell projection. Its subcellular location is the cilium. It is found in the dendritic spine. Its function is as follows. Microtubule-based molecular motor that transport intracellular cargos, such as vesicles, organelles and protein complexes. Uses ATP hydrolysis to generate force to bind and move along the microtubule. Plays a role in cilia formation. Required for photoreceptor development. The polypeptide is Kinesin-like protein KIF3B (Danio rerio (Zebrafish)).